The chain runs to 447 residues: Omega-6 fatty acid desaturase, chloroplastic (447 aa).

The transit peptide at 1–65 (MESAITISNH…TRRKSTLVQA (65 aa)) directs the protein to the chloroplast. Residue Val66 is modified to N-acetylvaline. Positions 171–175 (HDCAH) match the Histidine box-1 motif. A Histidine box-2 motif is present at residues 207 to 211 (HDQHH). A Histidine box-3 motif is present at residues 367 to 371 (HIPHH).

The protein belongs to the fatty acid desaturase type 1 family.

It is found in the plastid. It localises to the chloroplast membrane. It catalyses the reaction a (9Z)-octadecenoyl-containing glycerolipid + 2 reduced [2Fe-2S]-[ferredoxin] + O2 + 2 H(+) = a (9Z,12Z)-octadecadienoyl-containing glycerolipid + 2 oxidized [2Fe-2S]-[ferredoxin] + 2 H2O. It participates in lipid metabolism; polyunsaturated fatty acid biosynthesis. Functionally, chloroplast omega-6 fatty acid desaturase introduces the second double bond in the biosynthesis of 16:3 and 18:3 fatty acids, important constituents of plant membranes. It is thought to use ferredoxin as an electron donor and to act on fatty acids esterified to galactolipids, sulfolipids and phosphatidylglycerol. This chain is Omega-6 fatty acid desaturase, chloroplastic, found in Spinacia oleracea (Spinach).